Consider the following 366-residue polypeptide: Putative [LysW]-aminoadipate semialdehyde/glutamate semialdehyde transaminase (366 aa).

Pyridoxal 5'-phosphate is bound by residues 90-91 (GT) and Phe-117. Arg-120 contacts substrate. 202–205 (DEVQ) contributes to the pyridoxal 5'-phosphate binding site. Lys-230 carries the post-translational modification N6-(pyridoxal phosphate)lysine. Ser-254 contacts substrate. Thr-255 provides a ligand contact to pyridoxal 5'-phosphate.

Belongs to the class-III pyridoxal-phosphate-dependent aminotransferase family. LysJ subfamily. Homodimer. It depends on pyridoxal 5'-phosphate as a cofactor.

It localises to the cytoplasm. It catalyses the reaction [amino-group carrier protein]-C-terminal-gamma-(L-lysyl)-L-glutamate + 2-oxoglutarate = [amino-group carrier protein]-C-terminal-N-(1-carboxy-5-oxopentan-1-yl)-L-glutamine + L-glutamate. The enzyme catalyses [amino-group carrier protein]-C-terminal-gamma-(L-ornithyl)-L-glutamate + 2-oxoglutarate = [amino-group carrier protein]-C-terminal-gamma-(L-glutamyl-5-semialdehyde)-L-glutamate + L-glutamate. The protein operates within amino-acid biosynthesis; L-lysine biosynthesis via AAA pathway; L-lysine from L-alpha-aminoadipate (Thermus route): step 4/5. It functions in the pathway amino-acid biosynthesis; L-arginine biosynthesis. Functionally, involved in both the arginine and lysine biosynthetic pathways. The protein is Putative [LysW]-aminoadipate semialdehyde/glutamate semialdehyde transaminase of Pyrococcus horikoshii (strain ATCC 700860 / DSM 12428 / JCM 9974 / NBRC 100139 / OT-3).